We begin with the raw amino-acid sequence, 543 residues long: Bifunctional riboflavin biosynthesis protein RIBA 1, chloroplastic (543 aa).

The transit peptide at 1–56 directs the protein to the chloroplast; sequence MSSINLSSSSPSTISLSRSRLSQSSTTLLHGLHRVTLPSNHPLSTFSIKTNTGKVK. The segment at 57-328 is DHBP synthase; sequence AAVISREDDL…IADLIRYRRK (272 aa). Residues 152–153, aspartate 157, 267–271, and glutamate 291 contribute to the D-ribulose 5-phosphate site; these read RE and RAGHT. Glutamate 153 provides a ligand contact to Mg(2+). Histidine 270 serves as a coordination point for Mg(2+). The GTP cyclohydrolase II stretch occupies residues 329–543; it reads RDKLVERASA…VEKIESESES (215 aa). 379–383 contacts GTP; that stretch reads RVHSE. Zn(2+) contacts are provided by cysteine 384, cysteine 395, and cysteine 397. GTP contacts are provided by residues glutamine 400, 423 to 425, and threonine 445; that span reads EGR. Aspartate 457 acts as the Proton acceptor; for GTP cyclohydrolase activity in catalysis. Arginine 459 (nucleophile; for GTP cyclohydrolase activity) is an active-site residue. GTP is bound by residues threonine 480 and lysine 485.

It in the N-terminal section; belongs to the DHBP synthase family. The protein in the C-terminal section; belongs to the GTP cyclohydrolase II family. It depends on Mg(2+) as a cofactor. Mn(2+) serves as cofactor. Requires Zn(2+) as cofactor. In terms of tissue distribution, expressed in leaves, shoots, roots, flowers and siliques.

Its subcellular location is the plastid. The protein localises to the chloroplast. The catalysed reaction is D-ribulose 5-phosphate = (2S)-2-hydroxy-3-oxobutyl phosphate + formate + H(+). The enzyme catalyses GTP + 4 H2O = 2,5-diamino-6-hydroxy-4-(5-phosphoribosylamino)-pyrimidine + formate + 2 phosphate + 3 H(+). Its pathway is cofactor biosynthesis; riboflavin biosynthesis; 2-hydroxy-3-oxobutyl phosphate from D-ribulose 5-phosphate: step 1/1. It participates in cofactor biosynthesis; riboflavin biosynthesis; 5-amino-6-(D-ribitylamino)uracil from GTP: step 1/4. In terms of biological role, involved in riboflavin biosynthesis. Catalyzes both the conversion of D-ribulose 5-phosphate to formate and 3,4-dihydroxy-2-butanone 4-phosphate and the conversion of GTP to 2,5-diamino-6-ribosylamino-4(3H)-pyrimidinone 5'-phosphate (DARP), formate and pyrophosphate. RIBA2 and RIBA3 together are not able to complement the loss of function of RIBA1. The chain is Bifunctional riboflavin biosynthesis protein RIBA 1, chloroplastic (RIBA1) from Arabidopsis thaliana (Mouse-ear cress).